The chain runs to 86 residues: Mu-theraphotoxin-Hhn1d (86 aa).

The signal sequence occupies residues 1–21 (MKASMFLALAGLALLFVVCYA). The propeptide occupies 22–49 (SESEEKEFSNELLSSVLAVDDNSKGEER). Intrachain disulfides connect Cys51/Cys66, Cys58/Cys73, and Cys65/Cys80. Ile84 carries the post-translational modification Isoleucine amide.

Belongs to the neurotoxin 10 (Hwtx-1) family. 22 (Htx-4) subfamily. As to quaternary structure, monomer. Expressed by the venom gland.

The protein localises to the secreted. Functionally, neurotoxin. Selectively blocks neuronal tetrodotoxin-sensitive voltage-gated sodium channels (Nav). Does not affect tetrodotoxin-resistant voltage-gated sodium channels or calcium channels. In Cyriopagopus hainanus (Chinese bird spider), this protein is Mu-theraphotoxin-Hhn1d.